The primary structure comprises 164 residues: N5-carboxyaminoimidazole ribonucleotide mutase (164 aa).

Substrate contacts are provided by serine 13, aspartate 16, and arginine 43.

This sequence belongs to the AIR carboxylase family. Class I subfamily.

The enzyme catalyses 5-carboxyamino-1-(5-phospho-D-ribosyl)imidazole + H(+) = 5-amino-1-(5-phospho-D-ribosyl)imidazole-4-carboxylate. Its pathway is purine metabolism; IMP biosynthesis via de novo pathway; 5-amino-1-(5-phospho-D-ribosyl)imidazole-4-carboxylate from 5-amino-1-(5-phospho-D-ribosyl)imidazole (N5-CAIR route): step 2/2. Catalyzes the conversion of N5-carboxyaminoimidazole ribonucleotide (N5-CAIR) to 4-carboxy-5-aminoimidazole ribonucleotide (CAIR). The protein is N5-carboxyaminoimidazole ribonucleotide mutase of Haemophilus influenzae (strain ATCC 51907 / DSM 11121 / KW20 / Rd).